A 252-amino-acid chain; its full sequence is tRNA pseudouridine synthase A (252 aa).

Asp-54 functions as the Nucleophile in the catalytic mechanism. Tyr-113 contacts substrate.

This sequence belongs to the tRNA pseudouridine synthase TruA family. As to quaternary structure, homodimer.

The enzyme catalyses uridine(38/39/40) in tRNA = pseudouridine(38/39/40) in tRNA. Formation of pseudouridine at positions 38, 39 and 40 in the anticodon stem and loop of transfer RNAs. The chain is tRNA pseudouridine synthase A from Bacteroides fragilis (strain ATCC 25285 / DSM 2151 / CCUG 4856 / JCM 11019 / LMG 10263 / NCTC 9343 / Onslow / VPI 2553 / EN-2).